A 349-amino-acid chain; its full sequence is Methylthioribose-1-phosphate isomerase (349 aa).

Residues 51 to 53 (RGA), R94, and Q199 contribute to the substrate site. The active-site Proton donor is the D240. Residue 250–251 (NK) coordinates substrate.

Belongs to the eIF-2B alpha/beta/delta subunits family. MtnA subfamily. In terms of assembly, homodimer.

It catalyses the reaction 5-(methylsulfanyl)-alpha-D-ribose 1-phosphate = 5-(methylsulfanyl)-D-ribulose 1-phosphate. Its pathway is amino-acid biosynthesis; L-methionine biosynthesis via salvage pathway; L-methionine from S-methyl-5-thio-alpha-D-ribose 1-phosphate: step 1/6. Catalyzes the interconversion of methylthioribose-1-phosphate (MTR-1-P) into methylthioribulose-1-phosphate (MTRu-1-P). This Bacillus cytotoxicus (strain DSM 22905 / CIP 110041 / 391-98 / NVH 391-98) protein is Methylthioribose-1-phosphate isomerase.